The sequence spans 363 residues: NAD(P)H-quinone oxidoreductase subunit 1, chloroplastic (363 aa).

Transmembrane regions (helical) follow at residues 30–50 (LVPI…IVWL), 98–118 (FSIG…VIPF), 129–149 (VGVF…LMSG), 165–185 (AAQS…ISLL), 253–273 (FAFF…FVTI), 303–323 (TTTE…ISIT), and 336–356 (LLNL…LLTT).

This sequence belongs to the complex I subunit 1 family. NDH is composed of at least 16 different subunits, 5 of which are encoded in the nucleus.

It is found in the plastid. It localises to the chloroplast thylakoid membrane. The enzyme catalyses a plastoquinone + NADH + (n+1) H(+)(in) = a plastoquinol + NAD(+) + n H(+)(out). The catalysed reaction is a plastoquinone + NADPH + (n+1) H(+)(in) = a plastoquinol + NADP(+) + n H(+)(out). Its function is as follows. NDH shuttles electrons from NAD(P)H:plastoquinone, via FMN and iron-sulfur (Fe-S) centers, to quinones in the photosynthetic chain and possibly in a chloroplast respiratory chain. The immediate electron acceptor for the enzyme in this species is believed to be plastoquinone. Couples the redox reaction to proton translocation, and thus conserves the redox energy in a proton gradient. This Pelargonium hortorum (Common geranium) protein is NAD(P)H-quinone oxidoreductase subunit 1, chloroplastic.